A 327-amino-acid chain; its full sequence is Alkanal monooxygenase beta chain (327 aa).

Belongs to the bacterial luciferase oxidoreductase family. Heterodimer of an alpha and a beta chain.

It carries out the reaction a long-chain fatty aldehyde + FMNH2 + O2 = a long-chain fatty acid + hnu + FMN + H2O + 2 H(+). Functionally, light-emitting reaction in luminous bacteria. The specific role of the beta subunit is unknown, but it is absolutely required for bioluminescence activity. This is Alkanal monooxygenase beta chain (luxB) from Photorhabdus luminescens (Xenorhabdus luminescens).